The chain runs to 68 residues: Serine rich endogenous peptide 22 (68 aa).

A signal peptide spans 1–25 (MNKALVWLITLLFLIFSATPNRVLA). Positions 50–64 (KIGVGASNSGHSPGA) match the SCOOP motif motif. Positions 56-58 (SNS) match the SxS motif essential for MIK2 binding motif.

It belongs to the serine rich endogenous peptide (SCOOP) phytocytokine family. In terms of assembly, interacts with MIK2 (via extracellular leucine-rich repeat domain); this interaction triggers the formation of complex between MIK2 and the BAK1/SERK3 and SERK4 coreceptors, and subsequent BAK1 activation by phosphorylation.

It localises to the cell membrane. It is found in the secreted. The protein localises to the extracellular space. Its subcellular location is the apoplast. In terms of biological role, brassicaceae-specific phytocytokine (plant endogenous peptide released into the apoplast) perceived by MIK2 in a BAK1/SERK3 and SERK4 coreceptors-dependent manner, that modulates various physiological and antimicrobial processes including growth prevention and reactive oxygen species (ROS) response regulation. The sequence is that of Serine rich endogenous peptide 22 from Arabidopsis thaliana (Mouse-ear cress).